Consider the following 314-residue polypeptide: MALGSAALFVLTLTVHAAGTCPELKVLDLEGYKQLTILQGCPGLPGAAGPKGEAGAKGDRGESGLPGIPGKEGPTGPKGNQGEKGIRGEKGDSGPSQSCATGPRTCKELLTQGHFLTGWYTIYLPDCRPLTVLCDMDTDGGGWTVFQRRLDGSVDFFRDWTSYKRGFGSQLGEFWLGNDNIHALTTQGTSELRVDLSDFEGKHDFAKYSSFQIQGEAEKYKLILGNFLGGGAGDSLTPHNNRLFSTKDQDNDGSTSSCAMGYHGAWWYSQCHTSNLNGLYLRGPHKSYANGVNWKSWRGYNYSCKVSEMKVRLI.

The N-terminal stretch at 1–17 is a signal peptide; it reads MALGSAALFVLTLTVHA. One can recognise a Collagen-like domain in the interval 40–96; that stretch reads GCPGLPGAAGPKGEAGAKGDRGESGLPGIPGKEGPTGPKGNQGEKGIRGEKGDSGPS. The disordered stretch occupies residues 49–101; it reads GPKGEAGAKGDRGESGLPGIPGKEGPTGPKGNQGEKGIRGEKGDSGPSQSCAT. Residues 97–314 enclose the Fibrinogen C-terminal domain; it reads QSCATGPRTC…KVSEMKVRLI (218 aa). Intrachain disulfides connect C99–C127 and C106–C134. Ca(2+)-binding residues include D250, D252, S254, and S256. A disulfide bridge links C258 with C271. The N-linked (GlcNAc...) asparagine glycan is linked to N301.

It belongs to the ficolin lectin family. As to quaternary structure, homotrimer. Interacts with elastin. Interacts with MASP1 and MASP2.

Its subcellular location is the secreted. Functionally, may function in innate immunity through activation of the lectin complement pathway. Calcium-dependent and GlcNAc-binding lectin. This is Ficolin-2 (Fcn2) from Mus musculus (Mouse).